The chain runs to 313 residues: tRNA (guanine-N(7)-)-methyltransferase (313 aa).

Residues Glu-33, Glu-58, and Asp-85 each contribute to the S-adenosyl-L-methionine site. Residues Lys-112, Asp-144, and 177–180 (TRYE) each bind substrate.

This sequence belongs to the class I-like SAM-binding methyltransferase superfamily. TrmB family.

It carries out the reaction guanosine(46) in tRNA + S-adenosyl-L-methionine = N(7)-methylguanosine(46) in tRNA + S-adenosyl-L-homocysteine. It participates in tRNA modification; N(7)-methylguanine-tRNA biosynthesis. Catalyzes the formation of N(7)-methylguanine at position 46 (m7G46) in tRNA. This is tRNA (guanine-N(7)-)-methyltransferase from Thermotoga maritima (strain ATCC 43589 / DSM 3109 / JCM 10099 / NBRC 100826 / MSB8).